A 259-amino-acid polypeptide reads, in one-letter code: Global transcriptional regulator CodY (259 aa).

The GAF domain stretch occupies residues 1-155 (MSLLSRMRKI…GATVVGMEIL (155 aa)). Positions 203–222 (ASKIADRVGITRSVIVNALR) form a DNA-binding region, H-T-H motif. The residue at position 215 (serine 215) is a Phosphoserine.

This sequence belongs to the CodY family.

Its subcellular location is the cytoplasm. Its function is as follows. DNA-binding global transcriptional regulator which is involved in the adaptive response to starvation and acts by directly or indirectly controlling the expression of numerous genes in response to nutrient availability. During rapid exponential growth, CodY is highly active and represses genes whose products allow adaptation to nutrient depletion. In Halalkalibacterium halodurans (strain ATCC BAA-125 / DSM 18197 / FERM 7344 / JCM 9153 / C-125) (Bacillus halodurans), this protein is Global transcriptional regulator CodY.